Reading from the N-terminus, the 549-residue chain is Glucose-6-phosphate isomerase (549 aa).

E355 serves as the catalytic Proton donor. Catalysis depends on residues H386 and K514.

Belongs to the GPI family.

The protein localises to the cytoplasm. The enzyme catalyses alpha-D-glucose 6-phosphate = beta-D-fructose 6-phosphate. The protein operates within carbohydrate biosynthesis; gluconeogenesis. It functions in the pathway carbohydrate degradation; glycolysis; D-glyceraldehyde 3-phosphate and glycerone phosphate from D-glucose: step 2/4. Its function is as follows. Catalyzes the reversible isomerization of glucose-6-phosphate to fructose-6-phosphate. This chain is Glucose-6-phosphate isomerase, found in Buchnera aphidicola subsp. Acyrthosiphon pisum (strain 5A).